Consider the following 152-residue polypeptide: Transcriptional regulator MraZ (152 aa).

SpoVT-AbrB domains lie at 5–52 (ATTL…PLPE) and 81–124 (ADDC…NEDA).

It belongs to the MraZ family. In terms of assembly, forms oligomers.

Its subcellular location is the cytoplasm. The protein resides in the nucleoid. This chain is Transcriptional regulator MraZ, found in Idiomarina loihiensis (strain ATCC BAA-735 / DSM 15497 / L2-TR).